The sequence spans 137 residues: Urease subunit beta (137 aa).

The tract at residues 118–137 (IIAEENKVSENANKESGYNR) is disordered. A compositionally biased stretch (polar residues) spans 126–137 (SENANKESGYNR).

This sequence belongs to the urease beta subunit family. As to quaternary structure, heterotrimer of UreA (gamma), UreB (beta) and UreC (alpha) subunits. Three heterotrimers associate to form the active enzyme.

It is found in the cytoplasm. The catalysed reaction is urea + 2 H2O + H(+) = hydrogencarbonate + 2 NH4(+). It participates in nitrogen metabolism; urea degradation; CO(2) and NH(3) from urea (urease route): step 1/1. In Staphylococcus xylosus, this protein is Urease subunit beta.